We begin with the raw amino-acid sequence, 313 residues long: LUC7-related splicing factor homolog (313 aa).

The disordered stretch occupies residues 237-313 (RKEREEKLGS…RDRRDRDRRY (77 aa)).

The protein belongs to the Luc7 family.

This is LUC7-related splicing factor homolog from Caenorhabditis elegans.